The following is a 240-amino-acid chain: MTPHRLLPPLLLLLALLLAASPGGALARCPGCGQGVQAGCPGGCVEEEDGGSPAEGCAEAEGCLRREGQECGVYTPNCAPGLQCHPPKDDEAPLRALLLGRGRCLPARAPAVAEENPKESKPQAGTARPQDVNRRDQQRNPGTSTTPSQPNSAGVQDTEMGPCRRHLDSVLQQLQTEVYRGAQTLYVPNCDHRGFYRKRQCRSSQGQRRGPCWCVDRMGKSLPGSPDGNGSSSCPTGSSG.

An N-terminal signal peptide occupies residues 1–27 (MTPHRLLPPLLLLLALLLAASPGGALA). Residues 28–107 (RCPGCGQGVQ…LLGRGRCLPA (80 aa)) enclose the IGFBP N-terminal domain. 5 disulfide bridges follow: cysteine 29–cysteine 32, cysteine 40–cysteine 44, cysteine 57–cysteine 63, cysteine 71–cysteine 84, and cysteine 78–cysteine 104. The disordered stretch occupies residues 109–160 (APAVAEENPKESKPQAGTARPQDVNRRDQQRNPGTSTTPSQPNSAGVQDTEM). An O-linked (HexNAc...) threonine glycan is attached at threonine 126. A compositionally biased stretch (polar residues) spans 139 to 155 (RNPGTSTTPSQPNSAGV). A glycan (O-linked (HexNAc...) serine) is linked at serine 144. Residues threonine 145 and threonine 146 are each glycosylated (O-linked (HexNAc...) threonine). A glycan (O-linked (HexNAc...) serine) is linked at serine 152. Positions 160 to 234 (MGPCRRHLDS…SPDGNGSSSC (75 aa)) constitute a Thyroglobulin type-1 domain. 3 disulfide bridges follow: cysteine 163/cysteine 190, cysteine 201/cysteine 212, and cysteine 214/cysteine 234. The segment at 217-240 (RMGKSLPGSPDGNGSSSCPTGSSG) is disordered. Over residues 228–240 (GNGSSSCPTGSSG) the composition is skewed to polar residues.

In terms of assembly, interacts (via C-terminal domain) with PHB2. Post-translationally, O-linked glycans consist of hexose (probably Gal), N-acetylhexosamine (probably GalNAc) and sialic acid residues. O-glycosylated with core 1 or possibly core 8 glycans. O-glycosylated on one site only in the region AA 143-168 in cerebrospinal fluid.

The protein localises to the secreted. In terms of biological role, IGF-binding proteins prolong the half-life of the IGFs and have been shown to either inhibit or stimulate the growth promoting effects of the IGFs on cell culture. They alter the interaction of IGFs with their cell surface receptors. Activates the MAPK signaling pathway and induces cell migration. The sequence is that of Insulin-like growth factor-binding protein 6 from Homo sapiens (Human).